The primary structure comprises 188 residues: Elongation factor P (188 aa).

The protein belongs to the elongation factor P family.

It localises to the cytoplasm. The protein operates within protein biosynthesis; polypeptide chain elongation. In terms of biological role, involved in peptide bond synthesis. Stimulates efficient translation and peptide-bond synthesis on native or reconstituted 70S ribosomes in vitro. Probably functions indirectly by altering the affinity of the ribosome for aminoacyl-tRNA, thus increasing their reactivity as acceptors for peptidyl transferase. This chain is Elongation factor P, found in Methylorubrum populi (strain ATCC BAA-705 / NCIMB 13946 / BJ001) (Methylobacterium populi).